Reading from the N-terminus, the 272-residue chain is MVDYTRIRLHGFNNLTKSLSFNIYDVCYAKTEAQRRAYIEYIDEEYNAERLTEILTNVAEIIGANVLNVARQDYDPQGASVTILISEGPVSPEEAEESAEARPGPLPDDVVAHLDKSHITVHTYPEMHPDKGVSTFRADIDVSTCGVISPLTALNYLIHSFDSDIVTMDYRVRGFTRDVEGHKHFIDHEINSIQNYLSEDTKERYQTLDVNVYQENIFHTKMILREFDLDNYLFGESSADLDEEEANTIRRHLRREMMEIFAGRNLPANQEV.

The Schiff-base intermediate with substrate; via pyruvic acid role is filled by S117. S117 bears the Pyruvic acid (Ser); by autocatalysis mark. H122 (proton acceptor; for processing activity) is an active-site residue. C145 functions as the Proton donor; for catalytic activity in the catalytic mechanism.

Belongs to the prokaryotic AdoMetDC family. Type 2 subfamily. In terms of assembly, heterooctamer of four alpha and four beta chains arranged as a tetramer of alpha/beta heterodimers. The cofactor is pyruvate. Post-translationally, is synthesized initially as an inactive proenzyme. Formation of the active enzyme involves a self-maturation process in which the active site pyruvoyl group is generated from an internal serine residue via an autocatalytic post-translational modification. Two non-identical subunits are generated from the proenzyme in this reaction, and the pyruvate is formed at the N-terminus of the alpha chain, which is derived from the carboxyl end of the proenzyme. The post-translation cleavage follows an unusual pathway, termed non-hydrolytic serinolysis, in which the side chain hydroxyl group of the serine supplies its oxygen atom to form the C-terminus of the beta chain, while the remainder of the serine residue undergoes an oxidative deamination to produce ammonia and the pyruvoyl group blocking the N-terminus of the alpha chain.

It carries out the reaction S-adenosyl-L-methionine + H(+) = S-adenosyl 3-(methylsulfanyl)propylamine + CO2. It participates in amine and polyamine biosynthesis; S-adenosylmethioninamine biosynthesis; S-adenosylmethioninamine from S-adenosyl-L-methionine: step 1/1. Its function is as follows. Catalyzes the decarboxylation of S-adenosylmethionine to S-adenosylmethioninamine (dcAdoMet), the propylamine donor required for the synthesis of the polyamines spermine and spermidine from the diamine putrescine. The sequence is that of S-adenosylmethionine decarboxylase proenzyme from Halorhodospira halophila (strain DSM 244 / SL1) (Ectothiorhodospira halophila (strain DSM 244 / SL1)).